A 367-amino-acid chain; its full sequence is RYamide receptor (367 aa).

Residues 1–35 lie on the Extracellular side of the membrane; sequence MDANTTRNESFSLDCELVNPNSTLANVYFLSAVYS. Residues Asn-4, Asn-8, and Asn-21 are each glycosylated (N-linked (GlcNAc...) asparagine). A helical membrane pass occupies residues 36 to 56; that stretch reads MYAIIFVVALIGNSFVCYIVL. At 57–66 the chain is on the cytoplasmic side; it reads SSPPMRTVTN. The chain crosses the membrane as a helical span at residues 67–87; the sequence is FFILNLAIGDVLITLLCVPFT. Residues 88-113 lie on the Extracellular side of the membrane; that stretch reads SVSLLMQYWPFGGILCPVVNYSQALS. An N-linked (GlcNAc...) asparagine glycan is attached at Asn-107. The chain crosses the membrane as a helical span at residues 114-134; the sequence is VFVSAYTLVAISIDKYMIIMW. At 135–143 the chain is on the cytoplasmic side; the sequence is PLKPRISKR. A helical transmembrane segment spans residues 144-164; it reads FATYIIALVWLIAGITVLPSA. The Extracellular segment spans residues 165–212; the sequence is TFTTLINDENILGTSAYEQCDKYICAEEYSKVGQEYGDLYTKVLMFLQ. A helical transmembrane segment spans residues 213-233; that stretch reads YVIPSLVLLFTYTSIGVVIWC. At 234-258 the chain is on the cytoplasmic side; the sequence is HRIPGEAENSRDQRIAKNKTKMIKM. Residues 259-279 form a helical membrane-spanning segment; it reads MVTVVCVYTICWLPYNVLMIF. Residues 280 to 282 are Extracellular-facing; sequence KEH. The chain crosses the membrane as a helical span at residues 283-303; it reads ISGSVMVYLYFPLHGLAMSHA. At 304–367 the chain is on the cytoplasmic side; the sequence is CYNPIIYCYM…EITRAQPTSA (64 aa).

Belongs to the G-protein coupled receptor 1 family.

The protein resides in the cell membrane. Its function is as follows. Receptor for the neuropeptides RYamide-1 and RYamide-2. The activity of this receptor is mediated by G proteins which activate a phosphatidyl-inositol-calcium second messenger system. RYamide-2 is the most potent activator. This Tribolium castaneum (Red flour beetle) protein is RYamide receptor.